Reading from the N-terminus, the 77-residue chain is uncharacterized protein (77 aa).

This is an uncharacterized protein from Escherichia coli (strain K12).